The following is a 417-amino-acid chain: Guanine nucleotide-exchange factor SEC12 (417 aa).

The Cytoplasmic portion of the chain corresponds to 1–388 (MGRRRGVELY…QLHLLPSRRS (388 aa)). The residue at position 10 (tyrosine 10) is a 3'-nitrotyrosine. Residues 101–135 (KGSKAEKSGSKEQGPRQRKGAPPAEKKSGAQVHPE) form a disordered region. The span at 103-115 (SKAEKSGSKEQGP) shows a compositional bias: basic and acidic residues. WD repeat units lie at residues 152–191 (SNEP…KVLE), 194–232 (AHEG…TQLQ), and 298–337 (CGHE…RLYY). Residues 389 to 409 (VPVWLLLLLCVGLIIVTILLL) traverse the membrane as a helical segment. At 410–417 (QTAFPGFL) the chain is on the lumenal side.

As to quaternary structure, interacts with SAR1B (GDP-bound form). Interacts with MIA2; recruits PREB to endoplasmic reticulum exit sites. Interacts with CIDEB; facilitating loading of SCAP-SREBP into COPII vesicles.

It is found in the endoplasmic reticulum membrane. The protein localises to the nucleus. Functionally, guanine nucleotide exchange factor (GEF) that regulates the assembly of the coat protein complex II/COPII in endoplasmic reticulum (ER) to Golgi vesicle-mediated transport. Selectively activates SAR1A and SAR1B by promoting the exchange of guanosine diphosphate (GDP) for guanosine triphosphate (GTP) in these small GTPases. In their activated GTP-bound state, SAR1A and SAR1B insert into the membrane of the endoplasmic reticulum where they recruit the remainder of the coat protein complex II/COPII which is responsible for both the sorting of proteins and the deformation and budding of membranes into vesicles destined to the Golgi. Was first identified based on its probable role in the regulation of pituitary gene transcription. Binds to the prolactin gene (PRL) promoter and seems to activate transcription. The sequence is that of Guanine nucleotide-exchange factor SEC12 from Mus musculus (Mouse).